The following is a 104-amino-acid chain: MAPQSAVDRAAMAQAAQDIEQSANAIRGMQNQLASAKDQLRSHWEGDASMAFEAVFNRFNEDFSRVLKALDGMHESLVQTRITYEAREEAAQQSVNRVQALLNG.

Positions M12–H43 form a coiled coil.

The protein belongs to the WXG100 family. CFP-10 subfamily. In isolation forms a homodimer. Forms a tight 1:1 complex with EsxA. Forms a complex with EsxA and EccC, probably wholly mediated by EsxB; binds in a pocket in the third FtsK (ATPase) domain of EccC (residues 1163-1208).

It localises to the secreted. Functionally, may help regulate assembly and function of the type VII secretion system (T7SS). Binds to EccC and induces its multimerization. May serve as a chaperone for EsxA. This chain is ESAT-6-like protein, found in Thermomonospora curvata (strain ATCC 19995 / DSM 43183 / JCM 3096 / KCTC 9072 / NBRC 15933 / NCIMB 10081 / Henssen B9).